We begin with the raw amino-acid sequence, 131 residues long: Small ribosomal subunit protein uS8 (131 aa).

Belongs to the universal ribosomal protein uS8 family. In terms of assembly, part of the 30S ribosomal subunit. Contacts proteins S5 and S12.

In terms of biological role, one of the primary rRNA binding proteins, it binds directly to 16S rRNA central domain where it helps coordinate assembly of the platform of the 30S subunit. This Pelodictyon phaeoclathratiforme (strain DSM 5477 / BU-1) protein is Small ribosomal subunit protein uS8.